The following is a 694-amino-acid chain: DNA ligase (694 aa).

Residues 41-45, 91-92, and Glu-121 each bind NAD(+); these read DAEFD and SL. The active-site N6-AMP-lysine intermediate is Lys-123. 4 residues coordinate NAD(+): Arg-144, Glu-184, Lys-300, and Lys-324. Zn(2+) is bound by residues Cys-418, Cys-421, Cys-437, and Cys-443. Positions 607–694 constitute a BRCT domain; it reads SVLPTCEGLT…QGPPVQQVVD (88 aa).

This sequence belongs to the NAD-dependent DNA ligase family. LigA subfamily. Requires Mg(2+) as cofactor. It depends on Mn(2+) as a cofactor.

It catalyses the reaction NAD(+) + (deoxyribonucleotide)n-3'-hydroxyl + 5'-phospho-(deoxyribonucleotide)m = (deoxyribonucleotide)n+m + AMP + beta-nicotinamide D-nucleotide.. In terms of biological role, DNA ligase that catalyzes the formation of phosphodiester linkages between 5'-phosphoryl and 3'-hydroxyl groups in double-stranded DNA using NAD as a coenzyme and as the energy source for the reaction. It is essential for DNA replication and repair of damaged DNA. In Mycobacterium leprae (strain TN), this protein is DNA ligase.